The following is an 802-amino-acid chain: Vacuolar membrane protease (802 aa).

Topologically, residues 1 to 13 (MARYNPLAFTSGP) are cytoplasmic. A helical transmembrane segment spans residues 14-34 (VVFFITITYTALLIALLLTHL). Over 35-357 (TLPSYPSHPP…KVFIVFQLHT (323 aa)) the chain is Vacuolar. N48, N102, N105, and N112 each carry an N-linked (GlcNAc...) asparagine glycan. Residues H152 and D164 each contribute to the Zn(2+) site. The active-site Proton acceptor is the E198. E199, E224, and H297 together coordinate Zn(2+). Residues 358–378 (FFALCVTLLVVAPLTLIGLAW) traverse the membrane as a helical segment. Residues 379–389 (SLHKADRNYLF) lie on the Cytoplasmic side of the membrane. Residues 390–409 (ARKAFVYSADDDEPIHLYGW) traverse the membrane as a helical segment. Topologically, residues 410–423 (RGFFRFPIAFGIAT) are vacuolar. A helical transmembrane segment spans residues 424 to 444 (SIVVGLAMMLSAWFAVSWFLL). The Cytoplasmic portion of the chain corresponds to 445 to 457 (HGADAMRPSALQR). The chain crosses the membrane as a helical span at residues 458–478 (MYSLLWLFIGSFCLLVFFTIL). The Vacuolar portion of the chain corresponds to 479–490 (ANNHQVAAGYPS). The chain crosses the membrane as a helical span at residues 491–511 (LFCFATVFLANVLSFLELFLA). Over 512–609 (PPKSAYAWNV…EQEWSGKLPS (98 aa)) the chain is Cytoplasmic. Disordered stretches follow at residues 528-554 (GSRPLTSSATAARSDNRATTDDDATET) and 570-603 (AGRRDAINEGANSQEPESRRRLDLGQPHSGEQEW). A helical transmembrane segment spans residues 610–630 (WIWIVQFSLLAPMIVILVGQI). The Vacuolar segment spans residues 631-649 (ALLLTSALYQTPSDGNSPL). Residues 650–670 (YIYTSIAALAVFLVAPIGPFI) traverse the membrane as a helical segment. The Cytoplasmic portion of the chain corresponds to 671–677 (HRFTHHV). A helical membrane pass occupies residues 678-698 (PTFLFLLCVATTIYNLVAFPF). Over 699–802 (SEQHKLKVYF…HDDSNNRGRR (104 aa)) the chain is Vacuolar. N-linked (GlcNAc...) asparagine glycans are attached at residues N746 and N779.

The protein belongs to the peptidase M28 family. The cofactor is Zn(2+).

It is found in the vacuole membrane. Its function is as follows. May be involved in vacuolar sorting and osmoregulation. This is Vacuolar membrane protease from Leptosphaeria maculans (strain JN3 / isolate v23.1.3 / race Av1-4-5-6-7-8) (Blackleg fungus).